The chain runs to 314 residues: tRNA dimethylallyltransferase (314 aa).

11 to 18 (GPTGSGKT) lines the ATP pocket. Substrate is bound at residue 13 to 18 (TGSGKT). Positions 36–39 (DSMQ) are interaction with substrate tRNA.

The protein belongs to the IPP transferase family. As to quaternary structure, monomer. Mg(2+) serves as cofactor.

It catalyses the reaction adenosine(37) in tRNA + dimethylallyl diphosphate = N(6)-dimethylallyladenosine(37) in tRNA + diphosphate. Its function is as follows. Catalyzes the transfer of a dimethylallyl group onto the adenine at position 37 in tRNAs that read codons beginning with uridine, leading to the formation of N6-(dimethylallyl)adenosine (i(6)A). The sequence is that of tRNA dimethylallyltransferase from Chlamydia trachomatis serovar D (strain ATCC VR-885 / DSM 19411 / UW-3/Cx).